Consider the following 412-residue polypeptide: Homoserine dehydrogenase (412 aa).

NADP(+)-binding positions include 9–16 and Lys-105; that span reads LGIGTVGG. Position 190 (Glu-190) interacts with substrate. Catalysis depends on Lys-205, which acts as the Proton donor. Residues 330–407 enclose the ACT domain; sequence YLRLRAVDKP…ISGKVTRLRM (78 aa).

The protein belongs to the homoserine dehydrogenase family.

It carries out the reaction L-homoserine + NADP(+) = L-aspartate 4-semialdehyde + NADPH + H(+). The catalysed reaction is L-homoserine + NAD(+) = L-aspartate 4-semialdehyde + NADH + H(+). It participates in amino-acid biosynthesis; L-methionine biosynthesis via de novo pathway; L-homoserine from L-aspartate: step 3/3. It functions in the pathway amino-acid biosynthesis; L-threonine biosynthesis; L-threonine from L-aspartate: step 3/5. The polypeptide is Homoserine dehydrogenase (hom) (Methylobacillus glycogenes).